We begin with the raw amino-acid sequence, 268 residues long: UPF0719 transmembrane protein aq_1349 (268 aa).

A run of 8 helical transmembrane segments spans residues 5–24 (LIALFWVIFSKYVFDVLFFR), 37–59 (NLALSLSYAGYFLGLAFSFYSVY), 69–91 (LYLIFVSFTLLLGVYIFDLIFLR), 104–126 (AGAGITQGIYFLSLGILISASFW), 130–152 (SFILSVIYSLIYLSLGMVMLFIS), 173–195 (FSASLVLGSITLGVSVVLYGAIS), 210–232 (VLYFVVSQVLMVIFYVVVEFLLF), and 245–267 (NLSASLILSATFIASAFITLAVM).

Belongs to the UPF0719 family.

The protein localises to the cell membrane. This Aquifex aeolicus (strain VF5) protein is UPF0719 transmembrane protein aq_1349.